We begin with the raw amino-acid sequence, 284 residues long: MKLVIVSGRSGSGKSVALRVLEDLGYYCVDNLPLPLIGSLLEQLKGSNDLVAISVDVRNMPEQDKVLVKQLASLPPDTELTSFFLNSSDKILLKRYSETRRLHPLSKSQVSLQEAIKLEGKLLEPMSKLVDHYIDTSNLNIYDLSDQVRQILLGSVDKELVINFESFGFKHGMPTEADFMFDVRFLPNPHWELALRPLTGLDEPVAEFLNRQPLVNKFIWQIENLLETWLPHLERNNRSYLTVAIGCTGGQHRSVYVAEQLAKRFSNGKHKVYARHRELNNAKA.

An ATP-binding site is contributed by 8–15; that stretch reads GRSGSGKS. 56-59 is a binding site for GTP; it reads DVRN.

This sequence belongs to the RapZ-like family.

Functionally, displays ATPase and GTPase activities. This chain is Nucleotide-binding protein Sbal_3671, found in Shewanella baltica (strain OS155 / ATCC BAA-1091).